The sequence spans 693 residues: Translation factor GUF1 homolog, chloroplastic (693 aa).

The transit peptide at 1 to 51 directs the protein to the chloroplast; that stretch reads MATDLSSSSTLLLSRNCKTPPFYHTTNSLSLSKTHHLYASRNAVVSRLRLL. In terms of domain architecture, tr-type G spans 86 to 267; the sequence is SNIRNFCIIA…AIVERIPSPR (182 aa). Residues 95 to 102, 160 to 164, and 214 to 217 contribute to the GTP site; these read AHIDHGKS, DTPGH, and NKID.

The protein belongs to the TRAFAC class translation factor GTPase superfamily. Classic translation factor GTPase family. LepA subfamily.

The protein localises to the plastid. It is found in the chloroplast. It catalyses the reaction GTP + H2O = GDP + phosphate + H(+). Its function is as follows. Promotes chloroplast protein synthesis. May act as a fidelity factor of the translation reaction, by catalyzing a one-codon backward translocation of tRNAs on improperly translocated ribosomes. This is Translation factor GUF1 homolog, chloroplastic from Ricinus communis (Castor bean).